Here is a 786-residue protein sequence, read N- to C-terminus: Endonuclease MutS2 (786 aa).

G333–T340 is a binding site for ATP. The disordered stretch occupies residues E682–T709. Positions L711–K786 constitute a Smr domain.

The protein belongs to the DNA mismatch repair MutS family. MutS2 subfamily. As to quaternary structure, homodimer. Binds to stalled ribosomes, contacting rRNA.

In terms of biological role, endonuclease that is involved in the suppression of homologous recombination and thus may have a key role in the control of bacterial genetic diversity. Acts as a ribosome collision sensor, splitting the ribosome into its 2 subunits. Detects stalled/collided 70S ribosomes which it binds and splits by an ATP-hydrolysis driven conformational change. Acts upstream of the ribosome quality control system (RQC), a ribosome-associated complex that mediates the extraction of incompletely synthesized nascent chains from stalled ribosomes and their subsequent degradation. Probably generates substrates for RQC. The polypeptide is Endonuclease MutS2 (Lacticaseibacillus casei (strain BL23) (Lactobacillus casei)).